Reading from the N-terminus, the 372-residue chain is BTB/POZ and TAZ domain-containing protein 4 (372 aa).

Residues 14–37 (SADSSSVPIPPPLPSKSDGLKKKL) are disordered. The BTB domain maps to 60-128 (ADVVIYTDNG…LYSSCYEKEE (69 aa)). Residues 238–330 (RIYSQLYEAM…SDQCRVPLCR (93 aa)) form a TAZ-type zinc finger. A caM-binding region spans residues 341–364 (KKDESRWKLLVKNVLGSKKIGGSP).

Interacts with GTE11/BET10 through the BTB domain. As to expression, preferentially expressed in leaves, stems and flowers.

The protein localises to the cytoplasm. It participates in protein modification; protein ubiquitination. In terms of biological role, may act as a substrate-specific adapter of an E3 ubiquitin-protein ligase complex (CUL3-RBX1-BTB) which mediates the ubiquitination and subsequent proteasomal degradation of target proteins. This Arabidopsis thaliana (Mouse-ear cress) protein is BTB/POZ and TAZ domain-containing protein 4 (BT4).